The sequence spans 172 residues: Nicotinamide-nucleotide adenylyltransferase (172 aa).

It belongs to the archaeal NMN adenylyltransferase family.

It localises to the cytoplasm. The catalysed reaction is beta-nicotinamide D-ribonucleotide + ATP + H(+) = diphosphate + NAD(+). The protein operates within cofactor biosynthesis; NAD(+) biosynthesis; NAD(+) from nicotinamide D-ribonucleotide: step 1/1. In Methanococcus aeolicus (strain ATCC BAA-1280 / DSM 17508 / OCM 812 / Nankai-3), this protein is Nicotinamide-nucleotide adenylyltransferase.